Here is a 76-residue protein sequence, read N- to C-terminus: Acyl carrier protein (76 aa).

The Carrier domain occupies 1–76 (MSIEERVKKI…SAIDYVQNNQ (76 aa)). At Ser36 the chain carries O-(pantetheine 4'-phosphoryl)serine.

This sequence belongs to the acyl carrier protein (ACP) family. In terms of processing, 4'-phosphopantetheine is transferred from CoA to a specific serine of apo-ACP by AcpS. This modification is essential for activity because fatty acids are bound in thioester linkage to the sulfhydryl of the prosthetic group.

It is found in the cytoplasm. The protein operates within lipid metabolism; fatty acid biosynthesis. In terms of biological role, carrier of the growing fatty acid chain in fatty acid biosynthesis. This chain is Acyl carrier protein, found in Mannheimia succiniciproducens (strain KCTC 0769BP / MBEL55E).